We begin with the raw amino-acid sequence, 348 residues long: Phosphate acyltransferase (348 aa).

This sequence belongs to the PlsX family. Homodimer. Probably interacts with PlsY.

Its subcellular location is the cytoplasm. The catalysed reaction is a fatty acyl-[ACP] + phosphate = an acyl phosphate + holo-[ACP]. It functions in the pathway lipid metabolism; phospholipid metabolism. In terms of biological role, catalyzes the reversible formation of acyl-phosphate (acyl-PO(4)) from acyl-[acyl-carrier-protein] (acyl-ACP). This enzyme utilizes acyl-ACP as fatty acyl donor, but not acyl-CoA. This Rhizobium rhizogenes (strain K84 / ATCC BAA-868) (Agrobacterium radiobacter) protein is Phosphate acyltransferase.